Consider the following 66-residue polypeptide: Large ribosomal subunit protein eL29 (66 aa).

The segment covering 1–14 (MAKSKNSTNKNQIS) has biased composition (polar residues). The disordered stretch occupies residues 1-66 (MAKSKNSTNK…KNLEKKVNKE (66 aa)). A compositionally biased stretch (basic residues) spans 15 to 31 (KSHRNGIKKPKDHRHIS). The span at 47–66 (IKNDPSIKKSKNLEKKVNKE) shows a compositional bias: basic and acidic residues.

This sequence belongs to the eukaryotic ribosomal protein eL29 family.

The protein localises to the cytoplasm. The sequence is that of Large ribosomal subunit protein eL29 (RPL29) from Tetrahymena thermophila.